Here is a 1100-residue protein sequence, read N- to C-terminus: Sorbin and SH3 domain-containing protein 2 (1100 aa).

Tyr13, Ser14, His27, Gly28, Ser30, and Ser43 each carry phosphoserine. Residues 30–52 (SLDSTDTYPQHAQSLDGTTSSSI) are compositionally biased toward polar residues. Residues 30 to 57 (SLDSTDTYPQHAQSLDGTTSSSIPLYRS) form a disordered region. In terms of domain architecture, SoHo spans 66 to 127 (VIKAPHYPGI…YNTPYTYNAG (62 aa)). A compositionally biased stretch (polar residues) spans 134–147 (SAQSHPAAKTQTYR). Residues 134–311 (SAQSHPAAKT…SPSRAKGGDD (178 aa)) form a disordered region. An Alanine amide modification is found at His153. Ser154 and Ser157 each carry phosphoserine. The span at 167–180 (PVPPPHVPPPVPPL) shows a compositional bias: pro residues. Residues 181–217 (RPRDRSSTEKHDWDPPDRKVDTRKFRSEPRSIFEYEP) show a composition bias toward basic and acidic residues. Residues Ser234 and Ile236 each carry the phosphothreonine modification. 6 positions are modified to phosphoserine: Ser239, Ser245, Ser248, Lys258, Ser259, and Glu260. Phosphothreonine occurs at positions 277, 280, and 282. Ser287 bears the Phosphoserine mark. Over residues 287–304 (SSTTLTKSFTSSSPSSPS) the composition is skewed to low complexity. The residue at position 292 (Thr292) is a Phosphothreonine. Phe295, Ser297, Ser298, Ser299, Ser301, Ser302, Ser304, Ala306, Asp311, and Pro316 each carry phosphoserine. Ser320, Ser322, and Gly326 each carry phosphothreonine. A phosphoserine mark is found at His341, Val344, and Arg346. Glu366 is modified (phosphothreonine). Ser381 and Ser383 each carry phosphoserine. A phosphothreonine mark is found at Asp413 and Lys415. Phosphoserine occurs at positions 437 and 439. Position 459 is a phosphothreonine (Ile459). 5 positions are modified to phosphoserine: Lys474, Ser494, Ser497, Ser550, and Ser750. The segment at 807-866 (RMPRSASFQDVDTANSSCHHQDRGGALQDRESPRSYSSTLTDMGRSAPRERRGTPEKEKL) is disordered. Residues 812 to 824 (ASFQDVDTANSSC) are compositionally biased toward polar residues. Positions 825–839 (HHQDRGGALQDRESP) are enriched in basic and acidic residues. Residue Ser843 is modified to Phosphoserine. Residues 853–866 (APRERRGTPEKEKL) are compositionally biased toward basic and acidic residues. SH3 domains are found at residues 863–922 (KEKL…KLTP) and 938–999 (GEIG…VVKK). A phosphoserine mark is found at Ser1017 and Ser1023. Residues 1041-1100 (GGGEPFQALYNYTPRNEDELELRESDVIDVMEKCDDGWFVGTSRRTKFFGTFPGNYVKRL) enclose the SH3 3 domain.

Interacts with ABL, CBL, DNM1, DNM2, FLOT1, AFDN, PTK2B/PYK2, SAPAP, SPTAN1, SYNJ1, SYNJ2, VCL/vinculin and WASF. Interacts with ABL1/c-Abl, ABL2/v-Abl/Arg, ACTN, CBL and PALLD. Interacts with PTPN12 and WASF1 via its SH3 domains; this interaction may mediate the partial PTPN12 and WASF1 translocation to focal adhesion sites. Post-translationally, ubiquitinated by CBL. Dephosphorylated by PTPN12. In terms of tissue distribution, abundantly expressed in heart. In cardiac muscle cells, located in the Z-disks of sarcomere. Also found, but to a lower extent, in small and large intestine, pancreas, thymus, colon, spleen, prostate, testis, brain, ovary and epithelial cells. In the pancreas, mainly expressed in acinar cells, duct cells and all cell types in islets (at protein level). Tends to be down-regulated in pancreatic adenocarcinomas ans metastases.

Its subcellular location is the cytoplasm. It localises to the perinuclear region. The protein localises to the apical cell membrane. The protein resides in the cell junction. It is found in the focal adhesion. Its subcellular location is the cell projection. It localises to the lamellipodium. In terms of biological role, adapter protein that plays a role in the assembling of signaling complexes, being a link between ABL kinases and actin cytoskeleton. Can form complex with ABL1 and CBL, thus promoting ubiquitination and degradation of ABL1. May play a role in the regulation of pancreatic cell adhesion, possibly by acting on WASF1 phosphorylation, enhancing phosphorylation by ABL1, as well as dephosphorylation by PTPN12. Isoform 6 increases water and sodium absorption in the intestine and gall-bladder. In Homo sapiens (Human), this protein is Sorbin and SH3 domain-containing protein 2 (SORBS2).